A 703-amino-acid polypeptide reads, in one-letter code: Arylphorin subunit beta (703 aa).

Positions 1-16 (MKTVIILAGLVALALG) are cleaved as a signal peptide. Residues Asn-72 and Asn-211 are each glycosylated (N-linked (GlcNAc...) asparagine).

Belongs to the hemocyanin family. Arylphorin is a hexamer of subunits alpha and beta. As to expression, fat body.

It is found in the secreted. The protein resides in the extracellular space. Its function is as follows. Arylphorin is a larval storage protein (LSP) which may serve as a storage protein used primarily as a source of aromatic amino acids for protein synthesis during metamorphosis. It is a constituent of the sclerotizing system of the cuticle, and serves as a carrier for ecdysteroid hormone. This is Arylphorin subunit beta from Manduca sexta (Tobacco hawkmoth).